The primary structure comprises 1086 residues: Tyrosine-protein kinase receptor svh-2 (1086 aa).

A signal peptide spans 1–34 (MVLGSSQSSAKELTTQSSIFRFLVLLLCFTSATG). The Extracellular segment spans residues 35–651 (GQINGKLLNG…DKKGSSPGWK (617 aa)). 5 N-linked (GlcNAc...) asparagine glycosylation sites follow: asparagine 276, asparagine 299, asparagine 461, asparagine 554, and asparagine 617. Residues 652 to 672 (IAIAIISVMTIILIVAIIVYY) traverse the membrane as a helical segment. Over 673–1086 (MRNRFPRIKT…LLSECSETSV (414 aa)) the chain is Cytoplasmic. The region spanning 735–996 (VDKLDPIGQG…SDLVTIIPNV (262 aa)) is the Protein kinase domain. ATP is bound by residues 741-749 (IGQGHYGVV) and lysine 767. Catalysis depends on aspartate 858, which acts as the Proton acceptor. Position 890 is a phosphotyrosine (tyrosine 890). The disordered stretch occupies residues 1056–1086 (AELPSDSPSTSTAIPQSTPYQLLSECSETSV). A compositionally biased stretch (polar residues) spans 1061–1086 (DSPSTSTAIPQSTPYQLLSECSETSV).

It belongs to the protein kinase superfamily. Tyr protein kinase family. In terms of assembly, interacts (via cytoplasmic domain) with mlk-1. Interacts with shc-1 (via SH2 domain). May interact (when tyrosine-phosphorylated) with tns-1 (via SH2 domain). Post-translationally, may be autophosphorylated on Tyr-890 following dimerization. As to expression, expressed in body wall and vulva muscles, pharynx, intestine, excretory canals, distal tip cells and some neurons. Expressed in D-type motor neurons upon axon injury.

The protein resides in the cell membrane. The catalysed reaction is L-tyrosyl-[protein] + ATP = O-phospho-L-tyrosyl-[protein] + ADP + H(+). In terms of biological role, receptor tyrosine kinase which may phosphorylate mlk-1, a component of the mlk-1, mek-1 and kgb-1 pathway. Involved in axon regeneration after injury by promoting the generation of productive and stable growth cones. The protein is Tyrosine-protein kinase receptor svh-2 of Caenorhabditis elegans.